Reading from the N-terminus, the 210-residue chain is Protein-methionine-sulfoxide reductase heme-binding subunit MsrQ (210 aa).

Helical transmembrane passes span Asp15–Trp35, Leu89–Phe109, Pro122–Thr142, and Leu160–His180.

The protein belongs to the MsrQ family. As to quaternary structure, heterodimer of a catalytic subunit (MsrP) and a heme-binding subunit (MsrQ). FMN is required as a cofactor. It depends on heme b as a cofactor.

The protein localises to the cell inner membrane. Its function is as follows. Part of the MsrPQ system that repairs oxidized periplasmic proteins containing methionine sulfoxide residues (Met-O), using respiratory chain electrons. Thus protects these proteins from oxidative-stress damage caused by reactive species of oxygen and chlorine generated by the host defense mechanisms. MsrPQ is essential for the maintenance of envelope integrity under bleach stress, rescuing a wide series of structurally unrelated periplasmic proteins from methionine oxidation. MsrQ provides electrons for reduction to the reductase catalytic subunit MsrP, using the quinone pool of the respiratory chain. This is Protein-methionine-sulfoxide reductase heme-binding subunit MsrQ from Caulobacter vibrioides (strain ATCC 19089 / CIP 103742 / CB 15) (Caulobacter crescentus).